A 459-amino-acid polypeptide reads, in one-letter code: Argininosuccinate lyase (459 aa).

Belongs to the lyase 1 family. Argininosuccinate lyase subfamily.

Its subcellular location is the cytoplasm. The enzyme catalyses 2-(N(omega)-L-arginino)succinate = fumarate + L-arginine. Its pathway is amino-acid biosynthesis; L-arginine biosynthesis; L-arginine from L-ornithine and carbamoyl phosphate: step 3/3. The chain is Argininosuccinate lyase from Staphylococcus aureus (strain USA300).